The following is a 605-amino-acid chain: Glucose oxidase (605 aa).

The N-terminal stretch at 1–18 is a signal peptide; sequence MVSVFLSTLLLAAATVQA. The FAD site is built by L52, T53, and E73. The N-linked (GlcNAc...) asparagine glycan is linked to N111. Positions 125, 129, 130, and 132 each coordinate FAD. N-linked (GlcNAc...) asparagine glycans are attached at residues N183 and N190. C186 and C228 are joined by a disulfide. V272 serves as a coordination point for FAD. Residues N335, N375, N410, and N519 are each glycosylated (N-linked (GlcNAc...) asparagine). H538 (proton acceptor) is an active-site residue. Residues K559 and V560 each contribute to the O2 site. FAD contacts are provided by G571 and M583.

It belongs to the GMC oxidoreductase family. In terms of assembly, homodimer. The cofactor is FAD.

Its subcellular location is the secreted. It is found in the cell wall. The protein localises to the cytoplasmic vesicle. It catalyses the reaction beta-D-glucose + O2 = D-glucono-1,5-lactone + H2O2. In terms of biological role, glucose oxidase catalyzes the oxidation of beta-D-glucose to D-glucono-delta-lactone and hydrogen peroxide in the presence of molecular oxygen. D-glucono-delta-lactone is sequentially hydrolyzed by lactonase to D-gluconic acid, and the resulting hydrogen peroxide is hydrolyzed by catalase to oxygen and water. Glucose oxidase alone indirectly causes toxicity in the presence of glucose and is the active compound of the antifungal antibiotic talaron. Responsible for inhibition of germination of microsclerotia of Verticillium dahliae. The sequence is that of Glucose oxidase from Talaromyces flavus.